Consider the following 417-residue polypeptide: Serine hydroxymethyltransferase 1 (417 aa).

(6S)-5,6,7,8-tetrahydrofolate is bound by residues Leu121 and 125–127 (GHL). Lys230 carries the N6-(pyridoxal phosphate)lysine modification. 355 to 357 (SPF) provides a ligand contact to (6S)-5,6,7,8-tetrahydrofolate.

Belongs to the SHMT family. Homodimer. The cofactor is pyridoxal 5'-phosphate.

It is found in the cytoplasm. The catalysed reaction is (6R)-5,10-methylene-5,6,7,8-tetrahydrofolate + glycine + H2O = (6S)-5,6,7,8-tetrahydrofolate + L-serine. It functions in the pathway one-carbon metabolism; tetrahydrofolate interconversion. Its pathway is amino-acid biosynthesis; glycine biosynthesis; glycine from L-serine: step 1/1. Its function is as follows. Catalyzes the reversible interconversion of serine and glycine with tetrahydrofolate (THF) serving as the one-carbon carrier. This reaction serves as the major source of one-carbon groups required for the biosynthesis of purines, thymidylate, methionine, and other important biomolecules. Also exhibits THF-independent aldolase activity toward beta-hydroxyamino acids, producing glycine and aldehydes, via a retro-aldol mechanism. This is Serine hydroxymethyltransferase 1 from Pseudomonas putida (strain ATCC 47054 / DSM 6125 / CFBP 8728 / NCIMB 11950 / KT2440).